A 100-amino-acid chain; its full sequence is Cytochrome b (100 aa).

3 consecutive transmembrane segments (helical) span residues M1–M21, W45–I66, and W81–V100. The heme b site is built by H51 and H65.

This sequence belongs to the cytochrome b family. As to quaternary structure, the cytochrome bc1 complex contains 3 respiratory subunits (MT-CYB, CYC1 and UQCRFS1), 2 core proteins (UQCRC1 and UQCRC2) and probably 6 low-molecular weight proteins. The cofactor is heme b.

It localises to the mitochondrion inner membrane. Its function is as follows. Component of the ubiquinol-cytochrome c reductase complex (complex III or cytochrome b-c1 complex) that is part of the mitochondrial respiratory chain. The b-c1 complex mediates electron transfer from ubiquinol to cytochrome c. Contributes to the generation of a proton gradient across the mitochondrial membrane that is then used for ATP synthesis. The sequence is that of Cytochrome b (mt-cyb) from Polypterus sp. (Bichir).